The primary structure comprises 559 residues: Spermidine/putrescine import ATP-binding protein PotA (559 aa).

Residues 7–448 form the ABC transporter domain; the sequence is IEIEGLNKTF…PKTEWIANFI (442 aa). Residue 40 to 47 coordinates ATP; the sequence is GPSGCGKT. The tract at residues 108–317 is insert; that stretch reads WTKLDEIPKL…EAFEKRYLSR (210 aa).

Belongs to the ABC transporter superfamily. Spermidine/putrescine importer (TC 3.A.1.11.1) family. As to quaternary structure, the complex is composed of two ATP-binding proteins (PotA), two transmembrane proteins (PotB and PotC) and a solute-binding protein (PotD).

It is found in the cell membrane. It carries out the reaction ATP + H2O + polyamine-[polyamine-binding protein]Side 1 = ADP + phosphate + polyamineSide 2 + [polyamine-binding protein]Side 1.. Functionally, part of the ABC transporter complex PotABCD involved in spermidine/putrescine import. Responsible for energy coupling to the transport system. The chain is Spermidine/putrescine import ATP-binding protein PotA from Mycoplasma genitalium (strain ATCC 33530 / DSM 19775 / NCTC 10195 / G37) (Mycoplasmoides genitalium).